The following is a 723-amino-acid chain: Dipeptidyl aminopeptidase BI (723 aa).

The first 23 residues, 1–23 (MKPTSLLLAATVLMSTPITSALA), serve as a signal peptide directing secretion. Residues serine 574, aspartate 659, and histidine 694 each act as charge relay system in the active site.

This sequence belongs to the peptidase S9A family. As to quaternary structure, monomer.

Its activity is regulated as follows. Nearly completely inhibited by 0.5 mM ZnCl(2), 0.1 mM N-tosyl-L-lysyl chloromethyl ketone (TLCK) and 0.1 mM leupeptin. Strongly inhibited by 0.5 mM CoCl(2) and 0.1 mM chymostatin. Activity is hardly affected by general serine protease inhibitors phenylmethanesulfonyl fluoride (PMSF), diisopropyl fluorophosphate (DFP) and N-tosyl-L-phenyl-alanyl chloromethyl ketone (TPCK) or by aspartyl protease inhibitor pepstatin A or by CaCl(2) and EDTA. Cysteine protease inhibitors, such as N-ethylmaleimide (NEM), iodoacetic acid and L-trans-epoxysuccinyl-leucylamido(4-guanido)butane (E-64) have no effect on activity. Sequentially removes dipeptide units (NH3-P2-P1-) from the amino termini of peptides and proteins. Is able to catalyze the removal of Asp-Arg from the amino termini of angiotensins I and II. Has slight endopeptidase activity on N-terminally blocked peptide derivatives which contain arginine residues at the P1 position. Does not hydrolyze Ala-Ala-Ala and Ala-Ala-Ala-Ala substrates or insulin beta chain. The protein is Dipeptidyl aminopeptidase BI of Pseudoxanthomonas mexicana.